Here is a 280-residue protein sequence, read N- to C-terminus: Virginiamycin B lyase (280 aa).

Residue H215 coordinates substrate. Residue E254 participates in Mg(2+) binding. The Proton acceptor role is filled by H256. E271 is a Mg(2+) binding site.

The protein belongs to the Vgb family. Monomer. The cofactor is Mg(2+).

Inactivates the type B streptogramin antibiotics by linearizing the lactone ring at the ester linkage, generating a free phenylglycine carboxylate and converting the threonyl moiety into 2-amino-butenoic acid. This is Virginiamycin B lyase from Mycobacterium sp. (strain JLS).